A 174-amino-acid chain; its full sequence is Thioredoxin O, mitochondrial (174 aa).

The N-terminal 59 residues, 1 to 59 (MALAHRLCRLPRLLPLAAAAAASKPYLPGKPSPAPPPPLSSPPPFPSLSRLFSTTPSSS), are a transit peptide targeting the mitochondrion. Positions 60-172 (GDSSMVVVGS…LESTMESLHK (113 aa)) constitute a Thioredoxin domain. Residues Cys-96 and Cys-99 each act as nucleophile in the active site. Cys-96 and Cys-99 are oxidised to a cystine.

Belongs to the thioredoxin family. Plant O-type subfamily.

It localises to the mitochondrion. Functionally, probable thiol-disulfide oxidoreductase that may participate in various redox reactions. This is Thioredoxin O, mitochondrial from Oryza sativa subsp. japonica (Rice).